Reading from the N-terminus, the 295-residue chain is Probable deoxyhypusine synthase (295 aa).

Residue Lys267 is the Nucleophile of the active site.

Belongs to the deoxyhypusine synthase family. NAD(+) serves as cofactor.

It catalyses the reaction [eIF5A protein]-L-lysine + spermidine = [eIF5A protein]-deoxyhypusine + propane-1,3-diamine. It participates in protein modification; eIF5A hypusination. In terms of biological role, catalyzes the NAD-dependent oxidative cleavage of spermidine and the subsequent transfer of the butylamine moiety of spermidine to the epsilon-amino group of a specific lysine residue of the eIF-5A precursor protein to form the intermediate deoxyhypusine residue. The protein is Probable deoxyhypusine synthase of Pyrobaculum calidifontis (strain DSM 21063 / JCM 11548 / VA1).